A 461-amino-acid polypeptide reads, in one-letter code: L-seryl-tRNA(Sec) selenium transferase (461 aa).

K294 is modified (N6-(pyridoxal phosphate)lysine).

The protein belongs to the SelA family. Pyridoxal 5'-phosphate serves as cofactor.

It localises to the cytoplasm. It catalyses the reaction L-seryl-tRNA(Sec) + selenophosphate + H(+) = L-selenocysteinyl-tRNA(Sec) + phosphate. The protein operates within aminoacyl-tRNA biosynthesis; selenocysteinyl-tRNA(Sec) biosynthesis; selenocysteinyl-tRNA(Sec) from L-seryl-tRNA(Sec) (bacterial route): step 1/1. Functionally, converts seryl-tRNA(Sec) to selenocysteinyl-tRNA(Sec) required for selenoprotein biosynthesis. The protein is L-seryl-tRNA(Sec) selenium transferase of Haemophilus influenzae (strain 86-028NP).